The primary structure comprises 568 residues: Sesquiterpene synthase 14 (568 aa).

Positions 319, 323, 463, and 471 each coordinate Mg(2+). The DDXXD motif motif lies at 319 to 323 (DDLYD).

It belongs to the terpene synthase family. Tpsa subfamily. Mg(2+) is required as a cofactor. Mn(2+) serves as cofactor. Mostly expressed in roots, to a lower extent in flowers and, at low levels, in fruits.

It carries out the reaction (2Z,6Z)-farnesyl diphosphate = (E)-alpha-bisabolene + diphosphate. It catalyses the reaction (2Z,6Z)-farnesyl diphosphate = beta-bisabolene + diphosphate. The catalysed reaction is (2E,6E)-farnesyl diphosphate = beta-bisabolene + diphosphate. The enzyme catalyses (2E,6E)-farnesyl diphosphate = (Z)-gamma-bisabolene + diphosphate. It carries out the reaction (2E,6E)-farnesyl diphosphate = (E)-gamma-bisabolene + diphosphate. It catalyses the reaction (2Z,6Z)-farnesyl diphosphate = (E)-gamma-bisabolene + diphosphate. It functions in the pathway secondary metabolite biosynthesis; terpenoid biosynthesis. Its function is as follows. Sesquiterpene synthase involved in the biosynthesis of volatile compounds. Mediates the conversion of (2E,6E)-farnesyl diphosphate ((EE)-FPP) into beta-bisabolene, and of (2Z,6Z)-farnesyl diphosphate ((ZZ)-FPP) into alpha-bisabolene, but also smaller amounts of (Z)-gamma-bisabolene, (E)-gamma-bisabolene and nerolidol. This chain is Sesquiterpene synthase 14, found in Solanum lycopersicum (Tomato).